The primary structure comprises 145 residues: Large ribosomal subunit protein uL15 (145 aa).

A disordered region spans residues 23–51; sequence IGSGWGKTGGRGHKGQKSRSGGKIRKSFE. Residues 32–47 are compositionally biased toward basic residues; that stretch reads GRGHKGQKSRSGGKIR.

This sequence belongs to the universal ribosomal protein uL15 family. Part of the 50S ribosomal subunit.

In terms of biological role, binds to the 23S rRNA. This chain is Large ribosomal subunit protein uL15, found in Buchnera aphidicola subsp. Cinara cedri (strain Cc).